The sequence spans 86 residues: MKTIFALVFCCAIAVVVLGFGENEGSTIDHDQNNCKGPGSRCSNKNECCKPKDMETYTYYCGSRWDSSSGDFVRKCVICNRESSMC.

A signal peptide spans 1–19 (MKTIFALVFCCAIAVVVLG). 4 cysteine pairs are disulfide-bonded: C35–C49, C42–C61, C48–C76, and C79–C86.

The protein belongs to the neurotoxin 21 family. As to expression, expressed by the venom gland.

It localises to the secreted. Its function is as follows. Probable neurotoxin with ion channel impairing activity. In Trittame loki (Brush-footed trapdoor spider), this protein is Toxin ICK-18.